Here is a 425-residue protein sequence, read N- to C-terminus: Glutamate-1-semialdehyde 2,1-aminomutase (425 aa).

K264 carries the N6-(pyridoxal phosphate)lysine modification.

Belongs to the class-III pyridoxal-phosphate-dependent aminotransferase family. HemL subfamily. Homodimer. It depends on pyridoxal 5'-phosphate as a cofactor.

The protein resides in the cytoplasm. It catalyses the reaction (S)-4-amino-5-oxopentanoate = 5-aminolevulinate. Its pathway is porphyrin-containing compound metabolism; protoporphyrin-IX biosynthesis; 5-aminolevulinate from L-glutamyl-tRNA(Glu): step 2/2. The chain is Glutamate-1-semialdehyde 2,1-aminomutase from Hydrogenobaculum sp. (strain Y04AAS1).